The primary structure comprises 215 residues: Pyrrolidone-carboxylate peptidase (215 aa).

Active-site residues include Glu80, Cys143, and His167.

The protein belongs to the peptidase C15 family. In terms of assembly, homotetramer.

The protein resides in the cytoplasm. The catalysed reaction is Release of an N-terminal pyroglutamyl group from a polypeptide, the second amino acid generally not being Pro.. In terms of biological role, removes 5-oxoproline from various penultimate amino acid residues except L-proline. This chain is Pyrrolidone-carboxylate peptidase, found in Bacillus cereus (strain ZK / E33L).